We begin with the raw amino-acid sequence, 850 residues long: Pentatricopeptide repeat-containing protein At3g49170, chloroplastic (850 aa).

The transit peptide at 1-50 (MAMISFSFPSPAKLPIKSQPSVSNRINVADRLILRHLNAGDLRGAVSALD) directs the protein to the chloroplast. PPR repeat units follow at residues 61-95 (DSVTFSSLLKSCIRARDFRLGKLVHARLIEFDIEP), 96-130 (DSVLYNSLISLYSKSGDSAKAEDVFETMRRFGKRD), 131-164 (VVSWSAMMACYGNNGRELDAIKVFVEFLELGLVP), 165-199 (NDYCYTAVIRACSNSDFVGVGRVTLGFLMKTGHFE), 201-232 (DVCVGCSLIDMFVKGENSFENAYKVFDKMSEL), 233-267 (NVVTWTLMITRCMQMGFPREAIRFFLDMVLSGFES), 268-302 (DKFTLSSVFSACAELENLSLGKQLHSWAIRSGLVD), 303-334 (DVECSLVDMYAKCSADGSVDDCRKVFDRMEDH), 335-370 (SVMSWTALITGYMKNCNLATEAINLFSEMITQGHVE), 372-406 (NHFTFSSAFKACGNLSDPRVGKQVLGQAFKRGLAS), 407-437 (NSSVANSVISMFVKSDRMEDAQRAFESLSEK), 438-472 (NLVSYNTFLDGTCRNLNFEQAFKLLSEITERELGV), 473-507 (SAFTFASLLSGVANVGSIRKGEQIHSQVVKLGLSC), 508-538 (NQPVCNALISMYSKCGSIDTASRVFNFMENR), 539-573 (NVISWTSMITGFAKHGFAIRVLETFNQMIEEGVKP), 574-609 (NEVTYVAILSACSHVGLVSEGWRHFNSMYEDHKIKP), and 610-640 (KMEHYACMVDLLCRAGLLTDAFEFINTMPFQ). Positions 645 to 720 (VWRTFLGACR…EGGCSWIEVG (76 aa)) are type E motif. The segment at 721–751 (DKIHKFYVGDTAHPNAHQIYDELDRLITEIK) is type E(+) motif. Residues 752-850 (RCGYVPDTDL…DGKCSCNDYW (99 aa)) form a type DYW motif region.

The protein belongs to the PPR family. PCMP-H subfamily.

It is found in the plastid. The protein localises to the chloroplast. Functionally, may play a role in embryogenesis. The sequence is that of Pentatricopeptide repeat-containing protein At3g49170, chloroplastic (EMB2261) from Arabidopsis thaliana (Mouse-ear cress).